The following is a 260-amino-acid chain: Indole-3-glycerol phosphate synthase (260 aa).

This sequence belongs to the TrpC family.

It catalyses the reaction 1-(2-carboxyphenylamino)-1-deoxy-D-ribulose 5-phosphate + H(+) = (1S,2R)-1-C-(indol-3-yl)glycerol 3-phosphate + CO2 + H2O. It participates in amino-acid biosynthesis; L-tryptophan biosynthesis; L-tryptophan from chorismate: step 4/5. This is Indole-3-glycerol phosphate synthase from Koribacter versatilis (strain Ellin345).